We begin with the raw amino-acid sequence, 118 residues long: Urease subunit beta (118 aa).

Belongs to the urease beta subunit family. Heterotrimer of UreA (gamma), UreB (beta) and UreC (alpha) subunits. Three heterotrimers associate to form the active enzyme.

Its subcellular location is the cytoplasm. The catalysed reaction is urea + 2 H2O + H(+) = hydrogencarbonate + 2 NH4(+). It participates in nitrogen metabolism; urea degradation; CO(2) and NH(3) from urea (urease route): step 1/1. The protein is Urease subunit beta of Aliivibrio fischeri (strain MJ11) (Vibrio fischeri).